A 246-amino-acid polypeptide reads, in one-letter code: Chemokine-binding protein (246 aa).

The span at 108–125 (SESSDGNTVNTRLSSVSP) shows a compositional bias: polar residues. Residues 108–132 (SESSDGNTVNTRLSSVSPGQGKDSP) are disordered.

The protein belongs to the orthopoxvirus OPG001 family.

The protein localises to the secreted. In terms of biological role, inhibits host immune defense by binding to host chemokines. Binds host CC chemokines (beta chemokines) such as RANTES with high affinity, but not CXC or C chemokines (alpha and gamma chemokines). The chain is Chemokine-binding protein (OPG001) from Monkeypox virus.